Consider the following 510-residue polypeptide: Histidine ammonia-lyase (510 aa).

A cross-link (5-imidazolinone (Ala-Gly)) is located at residues 143 to 145 (ASG). Ser144 is subject to 2,3-didehydroalanine (Ser).

The protein belongs to the PAL/histidase family. Post-translationally, contains an active site 4-methylidene-imidazol-5-one (MIO), which is formed autocatalytically by cyclization and dehydration of residues Ala-Ser-Gly.

It is found in the cytoplasm. It catalyses the reaction L-histidine = trans-urocanate + NH4(+). It functions in the pathway amino-acid degradation; L-histidine degradation into L-glutamate; N-formimidoyl-L-glutamate from L-histidine: step 1/3. The sequence is that of Histidine ammonia-lyase from Shewanella pealeana (strain ATCC 700345 / ANG-SQ1).